Here is a 176-residue protein sequence, read N- to C-terminus: NAD(P)H-quinone oxidoreductase subunit J (176 aa).

A disordered region spans residues 1–32 (MEKEGLAKSSDTSIKKEGFISQSLSKDGIPNQ). Over residues 20–32 (ISQSLSKDGIPNQ) the composition is skewed to polar residues.

It belongs to the complex I 30 kDa subunit family. NDH-1 can be composed of about 15 different subunits; different subcomplexes with different compositions have been identified which probably have different functions.

Its subcellular location is the cellular thylakoid membrane. The catalysed reaction is a plastoquinone + NADH + (n+1) H(+)(in) = a plastoquinol + NAD(+) + n H(+)(out). It carries out the reaction a plastoquinone + NADPH + (n+1) H(+)(in) = a plastoquinol + NADP(+) + n H(+)(out). In terms of biological role, NDH-1 shuttles electrons from an unknown electron donor, via FMN and iron-sulfur (Fe-S) centers, to quinones in the respiratory and/or the photosynthetic chain. The immediate electron acceptor for the enzyme in this species is believed to be plastoquinone. Couples the redox reaction to proton translocation, and thus conserves the redox energy in a proton gradient. Cyanobacterial NDH-1 also plays a role in inorganic carbon-concentration. This chain is NAD(P)H-quinone oxidoreductase subunit J, found in Prochlorococcus marinus (strain MIT 9215).